The sequence spans 24 residues: Ascaphin-5 (24 aa).

In terms of tissue distribution, expressed by the skin glands.

It is found in the secreted. Antimicrobial peptide. Synthetic peptide shows higher potency against Gram-negative bacteria than against Gram-positive bacteria. Has a very week hemolytic activity. In Ascaphus truei (Coastal tailed frog), this protein is Ascaphin-5.